An 864-amino-acid chain; its full sequence is A-kinase anchor protein 3 (864 aa).

Ser12 is subject to Phosphoserine; by STK33. The PKA-RII subunit binding domain stretch occupies residues 125–138; that stretch reads VSFYANRLTNLVIA. 2 disordered regions span residues 190–235 and 251–281; these read NISS…DKPG and AGDAKEGGRSLPGDQKLFRTSPDNRPDDFSN. Polar residues predominate over residues 204-218; sequence SGSSQAPGLRYTSTL. Ser206 carries the post-translational modification Phosphoserine. The span at 219 to 235 shows a compositional bias: basic and acidic residues; it reads KIKESTKEGKCPDDKPG. Ser405 is subject to Phosphoserine. Residue Tyr406 is modified to Phosphotyrosine. The segment at 619–638 is disordered; sequence VHEQNTQEEEIHPCERPKTP. Residues 627–638 are compositionally biased toward basic and acidic residues; the sequence is EEIHPCERPKTP.

The protein belongs to the AKAP110 family. In terms of assembly, interacts with ROPN1 and ROPN1L. Interacts with QRICH2. In terms of processing, phosphorylated by STK33 during sperm flagella assembly. Phosphorylated on tyrosine.

It localises to the cytoplasmic vesicle. The protein localises to the secretory vesicle. Its subcellular location is the acrosome. The protein resides in the cell projection. It is found in the cilium. It localises to the flagellum. Functionally, structural component of sperm fibrous sheath. Required for the formation of the subcellular structure of the sperm flagellum, sperm motility and male fertility. This Mus musculus (Mouse) protein is A-kinase anchor protein 3.